A 579-amino-acid polypeptide reads, in one-letter code: Zinc finger protein 382 (579 aa).

A compositionally biased stretch (basic residues) spans 1 to 12 (MGRPGRKPRGRA). Positions 1 to 37 (MGRPGRKPRGRARPGLFPFPKEELRQGGSSPANLNAM) are disordered. The interval 12 to 135 (ARPGLFPFPK…DKPPKSIVII (124 aa)) is mediates interaction with TRIM28. Over residues 27–36 (GGSSPANLNA) the composition is skewed to polar residues. Represses transcription regions lie at residues 40-81 (GPVS…FISV) and 105-240 (IFPS…PEQR). Residues 42-113 (VSFKDVTVDF…RIFPSQSYLE (72 aa)) form the KRAB domain. A C2H2-type 1; degenerate zinc finger spans residues 241–263 (FEYNKCDSSFLMTGVEFPHGRAH). C2H2-type zinc fingers lie at residues 325–347 (FQCP…ERIH), 353–375 (YICC…EKTH), 381–403 (YLCV…HKAH), 409–431 (YECT…QRTH), 437–459 (YQCT…QRTH), 465–487 (YICS…QRIH), 493–515 (YICS…YRIH), 521–543 (NGCP…QKIH), and 549–571 (YECQ…QKTH). Positions 325–579 (FQCPYCGNSF…THKTETMRFQ (255 aa)) are required for transcriptional repression activity; probably mediates sequence-specific DNA-binding.

It belongs to the krueppel C2H2-type zinc-finger protein family. As to quaternary structure, interacts with TRIM28; enhances the transcriptional repressor activity.

It localises to the nucleus. In terms of biological role, functions as a sequence-specific transcriptional repressor. The polypeptide is Zinc finger protein 382 (Znf382) (Mus musculus (Mouse)).